The chain runs to 166 residues: Ribosome maturation factor RimM (166 aa).

Residues 91–163 (EDEFYEFQLI…KMQITPPEGW (73 aa)) form the PRC barrel domain.

It belongs to the RimM family. As to quaternary structure, binds ribosomal protein uS19.

Its subcellular location is the cytoplasm. Its function is as follows. An accessory protein needed during the final step in the assembly of 30S ribosomal subunit, possibly for assembly of the head region. Essential for efficient processing of 16S rRNA. May be needed both before and after RbfA during the maturation of 16S rRNA. It has affinity for free ribosomal 30S subunits but not for 70S ribosomes. This is Ribosome maturation factor RimM from Sulfurihydrogenibium sp. (strain YO3AOP1).